The primary structure comprises 497 residues: Glycerol kinase (497 aa).

Thr-11 contributes to the ADP binding site. 3 residues coordinate ATP: Thr-11, Ser-12, and Ser-13. Residue Thr-11 coordinates sn-glycerol 3-phosphate. Arg-15 provides a ligand contact to ADP. The sn-glycerol 3-phosphate site is built by Arg-81, Glu-82, Tyr-133, and Asp-242. The glycerol site is built by Arg-81, Glu-82, Tyr-133, Asp-242, and Gln-243. ADP contacts are provided by Thr-264 and Gly-307. ATP-binding residues include Thr-264, Gly-307, Gln-311, and Gly-412. ADP-binding residues include Gly-412 and Asn-416.

The protein belongs to the FGGY kinase family.

The enzyme catalyses glycerol + ATP = sn-glycerol 3-phosphate + ADP + H(+). The protein operates within polyol metabolism; glycerol degradation via glycerol kinase pathway; sn-glycerol 3-phosphate from glycerol: step 1/1. With respect to regulation, inhibited by fructose 1,6-bisphosphate (FBP). In terms of biological role, key enzyme in the regulation of glycerol uptake and metabolism. Catalyzes the phosphorylation of glycerol to yield sn-glycerol 3-phosphate. This chain is Glycerol kinase, found in Variovorax paradoxus (strain S110).